The sequence spans 376 residues: Protein-tyrosine sulfotransferase 2 (376 aa).

At 1 to 8 the chain is on the cytoplasmic side; sequence MRLSVRKV. Residues 9 to 25 traverse the membrane as a helical; Signal-anchor for type II membrane protein segment; it reads LLAVGCALALVLAVQLG. At 26–376 the chain is on the lumenal side; that stretch reads QQVLECRAVL…NSTSPHLGSS (351 aa). Residue 77–81 participates in 3'-phosphoadenylyl sulfate binding; sequence RSGTT. A disulfide bridge links cysteine 95 with cysteine 155. Glutamate 98 functions as the Proton donor/acceptor in the catalytic mechanism. The segment at 100–104 is interaction with peptide substrate; sequence RIIPR. 3 residues coordinate 3'-phosphoadenylyl sulfate: arginine 182, serine 190, and arginine 194. Cysteines 224 and 232 form a disulfide. 3'-phosphoadenylyl sulfate contacts are provided by residues tyrosine 237, 284-293, and lysine 299; that span reads STDQVIKPVN. N-linked (GlcNAc...) asparagine glycosylation is found at asparagine 342 and asparagine 367.

The protein belongs to the protein sulfotransferase family. In terms of assembly, homodimer. Can also form heterodimers with TPST1. N-glycosylated.

Its subcellular location is the golgi apparatus membrane. It catalyses the reaction L-tyrosyl-[protein] + 3'-phosphoadenylyl sulfate = O-sulfo-L-tyrosine-[protein] + adenosine 3',5'-bisphosphate + H(+). Its function is as follows. Catalyzes the O-sulfation of tyrosine residues within acidic motifs of polypeptides, using 3'-phosphoadenylyl sulfate (PAPS) as cosubstrate. The polypeptide is Protein-tyrosine sulfotransferase 2 (Tpst2) (Rattus norvegicus (Rat)).